Reading from the N-terminus, the 228-residue chain is UPF0134 protein MPN_137 (228 aa).

The protein belongs to the UPF0134 family.

This chain is UPF0134 protein MPN_137, found in Mycoplasma pneumoniae (strain ATCC 29342 / M129 / Subtype 1) (Mycoplasmoides pneumoniae).